We begin with the raw amino-acid sequence, 441 residues long: GTPase Der (441 aa).

EngA-type G domains follow at residues 4–169 (PVVA…PDSS) and 178–353 (PRVA…ENNS). GTP-binding positions include 10 to 17 (GRPNVGKS), 57 to 61 (DTGGI), 120 to 123 (NKVD), 184 to 191 (GKPNVGKS), 231 to 235 (DTAGL), and 296 to 299 (NKWD). The KH-like domain maps to 354–438 (MRVATGVLNE…ALKFITRERK (85 aa)).

Belongs to the TRAFAC class TrmE-Era-EngA-EngB-Septin-like GTPase superfamily. EngA (Der) GTPase family. As to quaternary structure, associates with the 50S ribosomal subunit.

GTPase that plays an essential role in the late steps of ribosome biogenesis. This chain is GTPase Der, found in Agathobacter rectalis (strain ATCC 33656 / DSM 3377 / JCM 17463 / KCTC 5835 / VPI 0990) (Eubacterium rectale).